The following is a 465-amino-acid chain: Trigger factor (465 aa).

Positions G164–P245 constitute a PPIase FKBP-type domain. Positions G430 to E465 are disordered. Over residues G440–G455 the composition is skewed to low complexity. A compositionally biased stretch (basic and acidic residues) spans D456–E465.

The protein belongs to the FKBP-type PPIase family. Tig subfamily.

It is found in the cytoplasm. The enzyme catalyses [protein]-peptidylproline (omega=180) = [protein]-peptidylproline (omega=0). Involved in protein export. Acts as a chaperone by maintaining the newly synthesized protein in an open conformation. Functions as a peptidyl-prolyl cis-trans isomerase. The sequence is that of Trigger factor from Nocardia farcinica (strain IFM 10152).